The primary structure comprises 232 residues: MERCPSLGVTLYALVVVLGLRAAPAGGQHYLHIRPAPSDNLPLVDLIEHPDPIFDPKEKDLNETLLRSLLGGHYDPGFMATSPPEDRPGGGGGPAGGAEDLAELDQLLRQRPSGAMPSEIKGLEFSEGLAQGKKQRLSKKLRRKLQMWLWSQTFCPVLYAWNDLGSRFWPRYVKVGSCFSKRSCSVPEGMVCKPSKSVHLTVLRWRCQRRGGQRCGWIPIQYPIISECKCSC.

The N-terminal stretch at 1–27 (MERCPSLGVTLYALVVVLGLRAAPAGG) is a signal peptide. An N-linked (GlcNAc...) asparagine glycan is attached at asparagine 62. Positions 77–99 (GFMATSPPEDRPGGGGGPAGGAE) are disordered. 4 cysteine pairs are disulfide-bonded: cysteine 155/cysteine 192, cysteine 178/cysteine 228, cysteine 184/cysteine 230, and cysteine 207/cysteine 215.

It belongs to the noggin family. In terms of assembly, homodimer. Interacts with GDF5; inhibits chondrocyte differentiation. As to expression, expressed in condensing cartilage and immature chondrocytes.

Its subcellular location is the secreted. Its function is as follows. Essential for cartilage morphogenesis and joint formation. Inhibitor of bone morphogenetic proteins (BMP) signaling which is required for growth and patterning of the neural tube and somite. Inhibits chondrocyte differentiation through its interaction with GDF5 and, probably, GDF6. This is Noggin (Nog) from Mus musculus (Mouse).